The chain runs to 309 residues: ATP-dependent Clp protease proteolytic subunit 3, chloroplastic (309 aa).

The transit peptide at 1-70 (MEMSLRLASS…WDVSSFSIDS (70 aa)) directs the protein to the chloroplast. Valine 71 is modified (N-acetylvaline). The active-site Nucleophile is serine 164. The active site involves histidine 189. Threonine 194 is modified (phosphothreonine). Residues 290–309 (DNTNLPSERSMTQNGYAAIE) form a disordered region. The span at 292–309 (TNLPSERSMTQNGYAAIE) shows a compositional bias: polar residues.

The protein belongs to the peptidase S14 family. Component of the chloroplastic Clp protease core complex which consist of at least 16 proteins: CLPP4 (3 copies), CLPP5 (3 copies), CLPR4 (2 copies), ClpP1 (1 copy), CLPP6 (1 copy), CLPR2 (1 copy), CLPT1 (1 copy), CLPT2 (1 copy) and 3 copies of CLPP3 and/or CLPR1 and/or CLPR3. The core complex is organized in two heptameric rings, one containing CLPP3,4,5,6 in a 1:2:3:1 ratio and the other CLPP1 and CLPR1,2,3,4 in a 3:1:1:1:1 ratio. Interacts with CHIP. In terms of processing, ubiquitinated in vitro by CHIP. Mostly expressed in leaves. Also detected in stems, and to a lower extent, in roots (at protein level).

Its subcellular location is the plastid. The protein resides in the chloroplast stroma. It catalyses the reaction Hydrolysis of proteins to small peptides in the presence of ATP and magnesium. alpha-casein is the usual test substrate. In the absence of ATP, only oligopeptides shorter than five residues are hydrolyzed (such as succinyl-Leu-Tyr-|-NHMec, and Leu-Tyr-Leu-|-Tyr-Trp, in which cleavage of the -Tyr-|-Leu- and -Tyr-|-Trp bonds also occurs).. Its function is as follows. Cleaves peptides in various proteins in a process that requires ATP hydrolysis. Has a chymotrypsin-like activity. Plays a major role in the degradation of misfolded proteins. In the absence of CLPP3, modified ClpPR core(s) could be formed, albeit at strongly reduced levels. The chain is ATP-dependent Clp protease proteolytic subunit 3, chloroplastic from Arabidopsis thaliana (Mouse-ear cress).